A 424-amino-acid polypeptide reads, in one-letter code: Probable threonylcarbamoyladenosine tRNA methylthiotransferase (424 aa).

Residues 1–106 (MRVAIETYGC…VVDAVYSALN (106 aa)) form the MTTase N-terminal domain. [4Fe-4S] cluster contacts are provided by Cys-10, Cys-44, Cys-73, Cys-143, Cys-147, and Cys-150. The Radical SAM core domain occupies 129 to 359 (LRENAIAIVS…TDLMRKIGLE (231 aa)). Residues 362–420 (KRFVGKKLRVLVTKEGKNGRNLARMNSYRAVVTEGAVGEFVEVKIKDCRFNYLIGQLAA) form the TRAM domain.

It belongs to the methylthiotransferase family. CDKAL1 subfamily. [4Fe-4S] cluster serves as cofactor.

The enzyme catalyses N(6)-L-threonylcarbamoyladenosine(37) in tRNA + (sulfur carrier)-SH + AH2 + 2 S-adenosyl-L-methionine = 2-methylsulfanyl-N(6)-L-threonylcarbamoyladenosine(37) in tRNA + (sulfur carrier)-H + 5'-deoxyadenosine + L-methionine + A + S-adenosyl-L-homocysteine + 2 H(+). Functionally, catalyzes the methylthiolation of N6-threonylcarbamoyladenosine (t(6)A), leading to the formation of 2-methylthio-N6-threonylcarbamoyladenosine (ms(2)t(6)A) at position 37 in tRNAs that read codons beginning with adenine. The sequence is that of Probable threonylcarbamoyladenosine tRNA methylthiotransferase from Archaeoglobus fulgidus (strain ATCC 49558 / DSM 4304 / JCM 9628 / NBRC 100126 / VC-16).